A 162-amino-acid polypeptide reads, in one-letter code: Disulfide bond formation protein B (162 aa).

The Cytoplasmic segment spans residues 1–8 (MTPLFRKA). The helical transmembrane segment at 9-25 (VWLLFAVSVCAFAGSLA) threads the bilayer. Residues 26–43 (AQYVLGMEPCVLCISQRL) lie on the Periplasmic side of the membrane. A disulfide bond links Cys35 and Cys38. A helical membrane pass occupies residues 44–60 (CVLATALCAAIVLMCRP). Residues 61–67 (RRKAGGL) lie on the Cytoplasmic side of the membrane. A helical transmembrane segment spans residues 68-85 (FGAVFISIPAVTGISVAA). Residues 86–141 (YQLWLQSLPPGTAPSCGAPWTFRLKGWPLFDWFEPVVRGFGNCAEPDYLLGVALPV) are Periplasmic-facing. Cysteines 101 and 128 form a disulfide. Residues 142–160 (WSVAYFLAVALTVWWAWAR) form a helical membrane-spanning segment. Residues 161 to 162 (AK) are Cytoplasmic-facing.

Belongs to the DsbB family.

It localises to the cell inner membrane. Functionally, required for disulfide bond formation in some periplasmic proteins. Acts by oxidizing the DsbA protein. This chain is Disulfide bond formation protein B, found in Neisseria meningitidis serogroup A / serotype 4A (strain DSM 15465 / Z2491).